A 427-amino-acid polypeptide reads, in one-letter code: Piwi protein (427 aa).

Residues 38-167 form a mid domain region; sequence PYEVPSLKYN…VQFVSKLGGK (130 aa). One can recognise a Piwi domain in the interval 110 to 406; the sequence is GIMLVLPEYN…VAGIIANVNR (297 aa). The interval 118–124 is binds 5'-phosphorylated end of guide DNA; the sequence is YNTPLYY. A binds target DNA region spans residues 147–148; the sequence is RN. Residues 150 to 155 are binds guide DNA; that stretch reads TFYVDN. Residues glutamine 159 and leucine 427 each coordinate a divalent metal cation. Positions 168–427 are PIWI domain; it reads PWILNVDPEK…RSLQTNPWFL (260 aa).

It belongs to the argonaute family. Short pAgo subfamily. Homodimer probably stabilized by DNA. Each subunit is capable of interacting with a DNA molecule. Requires a divalent metal cation as cofactor.

Functionally, might play a role in defense against invading genetic elements, using short nucleic acid sequences as guides to bind complementary target strands, resulting in slicing of the target nucleic acid. Binds nucleic acids with decreasing affinity in the following order; ssDNA, ssRNA, dsDNA, RNA-DNA, RNA-RNA. Association of the 5' seed region of the guide strand (nucleotides 2-7) with AfPiwi increases affinity for the corresponding target strand; the greatest increase in affinity is for guide DNA with target RNA. The protein is Piwi protein of Archaeoglobus fulgidus (strain ATCC 49558 / DSM 4304 / JCM 9628 / NBRC 100126 / VC-16).